Here is a 1176-residue protein sequence, read N- to C-terminus: Chromosome partition protein Smc (1176 aa).

32–39 (PNGCGKSN) is an ATP binding site. The stretch at 169-506 (GVSRYKERRR…VKLQEDVQKQ (338 aa)) forms a coiled coil. Positions 521–623 (LGRLWQKLHI…TAPDLGQALA (103 aa)) constitute an SMC hinge domain. Coiled-coil stretches lie at residues 653-947 (DSEQ…LAAM) and 987-1024 (ERKE…LQAT).

The protein belongs to the SMC family. In terms of assembly, homodimer.

The protein resides in the cytoplasm. Its function is as follows. Required for chromosome condensation and partitioning. In Bordetella petrii (strain ATCC BAA-461 / DSM 12804 / CCUG 43448), this protein is Chromosome partition protein Smc.